Here is an 802-residue protein sequence, read N- to C-terminus: Exocyst complex component 6 (802 aa).

It belongs to the SEC15 family. In terms of assembly, the exocyst complex is composed of EXOC1, EXOC2, EXOC3, EXOC4, EXOC5, EXOC6, EXOC7 and EXOC8. Interacts with CNTRL. Interacts with RAB11A in a GTP-dependent manner.

The protein resides in the cytoplasm. It localises to the perinuclear region. The protein localises to the cell projection. It is found in the growth cone. Its subcellular location is the midbody. The protein resides in the midbody ring. In terms of biological role, component of the exocyst complex involved in the docking of exocytic vesicles with fusion sites on the plasma membrane. Together with RAB11A, RAB3IP, RAB8A, PARD3, PRKCI, ANXA2, CDC42 and DNMBP promotes transcytosis of PODXL to the apical membrane initiation sites (AMIS), apical surface formation and lumenogenesis. The sequence is that of Exocyst complex component 6 (Exoc6) from Mus musculus (Mouse).